A 549-amino-acid polypeptide reads, in one-letter code: SH3 domain-containing protein 21 (549 aa).

Residues 1–56 (MVQSELQLQPRAGRRADASNWGDFGSDKGGLGNTDIPPITPNSQRPPKLSNLTYDS) form a disordered region. Positions 41-54 (PNSQRPPKLSNLTY) are enriched in polar residues. In terms of domain architecture, SH3 spans 65–126 (SCPETCRVLF…PDNFVIPPPP (62 aa)). Disordered stretches follow at residues 142-303 (PIKE…KPAK) and 332-479 (FKKE…KSKN). The segment covering 211 to 220 (QASQQHSASS) has biased composition (low complexity). 2 stretches are compositionally biased toward basic and acidic residues: residues 267 to 280 (PVPKKAPDSDKIPA) and 332 to 342 (FKKEPSRDNDQ). Composition is skewed to polar residues over residues 343–365 (CQHLPQGGSTQRPESPAPSNNIQ) and 439–456 (VLPQESAPTPQVPHTIQQ). A coiled-coil region spans residues 482–510 (MDVLESLKEEVGLLRSRLELLELKLEQKM). Residues 528–549 (QMMQRNRKSFKHAETQTETQTE) form a disordered region.

The chain is SH3 domain-containing protein 21 (Sh3d21) from Mus musculus (Mouse).